The following is a 446-amino-acid chain: MIIRRLFSISNRSFFLKKPQFDVKKIIEMIPQYQTSIQNRELIEADSIIRSLQLLGERYQNIKEIDKVIADIQIQRKSIEAQIKKDKTKITEYSAALKALKEQYNDQNSKSSELKKKILETCKSLPNTLDPTVPLDAPQIEQWINPLKTHKTSEAQAHVDIMLKKNMLDLQTASNVTGMSWYYLLNDGARLEQALVAYALKKANENGFSSCVPPSITKKELIDACGFNPRDMNNERQIYALQDTNLGLVATAEIPLAGLGANKVLELNSGECSKKLVGVSRCYRAEAGARGKDTKGLYRVHEFTKVELFCWSKPETSAKVLEEIKQFQISVVEELGIPAKVLNMPSNDLGNPAFKKYDIEAWMPGRGKFGEISSASNCTDFQSRRLNTKYRDDNTGKLEYVHTLNGTAMAIPRVIVALVENFYDPSTGKISVPECLREFMNGQRYI.

251-253 is an L-serine binding site; sequence TAE. Residues 284-286 and Val300 each bind ATP; that span reads RAE. An L-serine-binding site is contributed by Glu307. Residue 371 to 374 coordinates ATP; the sequence is EISS. An L-serine-binding site is contributed by Thr407.

The protein belongs to the class-II aminoacyl-tRNA synthetase family. Type-1 seryl-tRNA synthetase subfamily. In terms of assembly, homodimer. The tRNA molecule binds across the dimer.

The protein resides in the mitochondrion matrix. It carries out the reaction tRNA(Ser) + L-serine + ATP = L-seryl-tRNA(Ser) + AMP + diphosphate + H(+). Catalyzes the attachment of serine to tRNA(Ser). The protein is Serine--tRNA ligase, mitochondrial (DIA4) of Saccharomyces cerevisiae (strain ATCC 204508 / S288c) (Baker's yeast).